A 489-amino-acid chain; its full sequence is Rhamnulokinase (489 aa).

13–17 (ASSGR) lines the ATP pocket. Cys68 and Cys222 are oxidised to a cystine. Substrate is bound by residues Gly83 and 236-238 (HDT). The Proton acceptor role is filled by Asp237. Position 259 (Thr259) interacts with ATP. Asn296 is a substrate binding site. ATP is bound at residue Gln304. A disulfide bridge connects residues Cys353 and Cys370. Gly402 is an ATP binding site. A disulfide bond links Cys413 and Cys417.

It belongs to the rhamnulokinase family. Monomer. It depends on Mg(2+) as a cofactor.

It catalyses the reaction L-rhamnulose + ATP = L-rhamnulose 1-phosphate + ADP + H(+). Its pathway is carbohydrate degradation; L-rhamnose degradation; glycerone phosphate from L-rhamnose: step 2/3. Its function is as follows. Involved in the catabolism of L-rhamnose (6-deoxy-L-mannose). Catalyzes the transfer of the gamma-phosphate group from ATP to the 1-hydroxyl group of L-rhamnulose to yield L-rhamnulose 1-phosphate. This is Rhamnulokinase from Escherichia coli O1:K1 / APEC.